Here is a 158-residue protein sequence, read N- to C-terminus: SsrA-binding protein (158 aa).

The protein belongs to the SmpB family.

It localises to the cytoplasm. Functionally, required for rescue of stalled ribosomes mediated by trans-translation. Binds to transfer-messenger RNA (tmRNA), required for stable association of tmRNA with ribosomes. tmRNA and SmpB together mimic tRNA shape, replacing the anticodon stem-loop with SmpB. tmRNA is encoded by the ssrA gene; the 2 termini fold to resemble tRNA(Ala) and it encodes a 'tag peptide', a short internal open reading frame. During trans-translation Ala-aminoacylated tmRNA acts like a tRNA, entering the A-site of stalled ribosomes, displacing the stalled mRNA. The ribosome then switches to translate the ORF on the tmRNA; the nascent peptide is terminated with the 'tag peptide' encoded by the tmRNA and targeted for degradation. The ribosome is freed to recommence translation, which seems to be the essential function of trans-translation. This Acinetobacter baumannii (strain AB307-0294) protein is SsrA-binding protein.